The following is a 168-amino-acid chain: Acetone carboxylase gamma subunit (168 aa).

Heterohexamer of two alpha, two beta and two gamma subunits. Requires Fe cation as cofactor. It depends on Mg(2+) as a cofactor. Zn(2+) is required as a cofactor.

The enzyme catalyses acetone + hydrogencarbonate + 2 ATP + 3 H2O = acetoacetate + 2 AMP + 4 phosphate + 4 H(+). Functionally, catalyzes the carboxylation of acetone to form acetoacetate. Has a reduced activity on butanone, and no activity on 2-pentatone, 3-pentatone, 2-hexanone, chloroacetone, pyruvate, phosphoenolpyruvate, acetaldehyde, propionaldehyde and propylene oxide. The polypeptide is Acetone carboxylase gamma subunit (Xanthobacter autotrophicus (strain ATCC BAA-1158 / Py2)).